Here is a 305-residue protein sequence, read N- to C-terminus: Guanine nucleotide-binding protein subunit beta (305 aa).

WD repeat units follow at residues 19 to 49 (NKLG…LVWD), 61 to 91 (APSV…VVYD), 104 to 133 (GHAG…MFWD), 145 to 176 (GHEM…KLWD), 188 to 218 (GNTS…RCFD), 231 to 260 (PSSS…EVWD), and 272 to 302 (GHEN…RLWS).

It belongs to the WD repeat G protein beta family. As to quaternary structure, g proteins are composed of 3 units, alpha, beta and gamma. Binding of the beta-gamma subunit complex (git5-git11) to the alpha subunit (gpa2) facilitates interaction with GPCR git3.

Its subcellular location is the cell membrane. The protein resides in the cytoplasm. The protein localises to the nucleus. Functionally, beta subunit of the heterotrimeric guanine nucleotide-binding protein (G protein) involved in glucose-induced cAMP signaling. The beta-gamma subunits (git5-git11) promote binding of the alpha subunit gpa2 to GPCR git3, which senses extracellular glucose, to activate cAMP-PKA signaling and repress sexual development and gluconeogenesis. The polypeptide is Guanine nucleotide-binding protein subunit beta (git5) (Schizosaccharomyces pombe (strain 972 / ATCC 24843) (Fission yeast)).